A 39-amino-acid chain; its full sequence is Photosystem II reaction center protein X (39 aa).

A helical transmembrane segment spans residues 10–30 (SSLVWAAVIVVIPAAVALVLI).

Belongs to the PsbX family. Type 1 subfamily. PSII is composed of 1 copy each of membrane proteins PsbA, PsbB, PsbC, PsbD, PsbE, PsbF, PsbH, PsbI, PsbJ, PsbK, PsbL, PsbM, PsbT, PsbX, PsbY, Psb30/Ycf12, peripheral proteins PsbO, CyanoQ (PsbQ), PsbU, PsbV and a large number of cofactors. It forms dimeric complexes.

The protein localises to the cellular thylakoid membrane. Functionally, involved in the binding and/or turnover of quinones at the Q(B) site of photosystem II (PSII). PSII is a light-driven water plastoquinone oxidoreductase, using light energy to abstract electrons from H(2)O, generating a proton gradient subsequently used for ATP formation. The sequence is that of Photosystem II reaction center protein X from Prochlorococcus marinus (strain MIT 9303).